Reading from the N-terminus, the 495-residue chain is Neuronal acetylcholine receptor subunit beta-4 (495 aa).

A signal peptide spans 1 to 20; that stretch reads MRGTPLLLVSLFALLQPGDC. The Extracellular portion of the chain corresponds to 21–235; that stretch reads RLANAEEKLM…IIKRKPLFYT (215 aa). Residues Asn-35, Asn-92, Asn-137, and Asn-165 are each glycosylated (N-linked (GlcNAc...) asparagine). An intrachain disulfide couples Cys-152 to Cys-166. A helical transmembrane segment spans residues 236–256; sequence INLIIPCVLITSLAILVFYLP. The Cytoplasmic portion of the chain corresponds to 257-264; it reads SDCGEKMT. Glu-261 is a binding site for Na(+). The helical transmembrane segment at 265–285 threads the bilayer; that stretch reads LCISVLLALTFFLLLISKIVP. Over 286-297 the chain is Extracellular; the sequence is PTSLDIPLIGKY. Residues 298–318 traverse the membrane as a helical segment; sequence LLFTMVLVTFSIVTTVCVLNV. The Cytoplasmic segment spans residues 319 to 463; that stretch reads HHRSPSTHTM…WKFVAMVVDR (145 aa). Residues 464–484 traverse the membrane as a helical segment; it reads LFLWVFVIVCILGTMGLFLPP. Residues 485-495 lie on the Extracellular side of the membrane; the sequence is LFQIHAPSKGL.

Belongs to the ligand-gated ion channel (TC 1.A.9) family. Acetylcholine receptor (TC 1.A.9.1) subfamily. Beta-4/CHRNB4 sub-subfamily. Neuronal AChR is composed of two different types of subunits: alpha and beta. CHRNB4/Beta-4 subunit can be combined to CHRNA2/alpha-2, CHRNA3/alpha-3 or CHRNA4/alpha-4, CHRNA5/alpha-5 and CHRNB3/beta-3 to give rise to functional receptors. Forms stoichiometries such as (CHRNA3)2:(CHRNB4)3 or (CHRNA3:CHRNB4)2:CHRNB3. Interacts with RIC3; which is required for proper folding and assembly. Interacts with LYPD6. As to expression, predominantly expressed by immature T-cells in the thymus.

Its subcellular location is the synaptic cell membrane. It is found in the cell membrane. The enzyme catalyses K(+)(in) = K(+)(out). It carries out the reaction Na(+)(in) = Na(+)(out). It catalyses the reaction Ca(2+)(in) = Ca(2+)(out). Activated by a myriad of ligands such as acetylcholine, cytisine, nicotine, choline and epibatidine. The heteropentamer CHRNA3:CHRNB4 activity is blocked by the alpha-conotoxin ImI and AuIB. In terms of biological role, component of neuronal acetylcholine receptors (nAChRs) that function as pentameric, ligand-gated cation channels with high calcium permeability among other activities. nAChRs are excitatory neurotrasnmitter receptors formed by a collection of nAChR subunits known to mediate synaptic transmission in the nervous system and the neuromuscular junction. Each nAchR subunit confers differential attributes to channel properties, including activation, deactivation and desensitization kinetics, pH sensitivity, cation permeability, and binding to allosteric modulators. CHRNB4 forms heteropentameric neuronal acetylcholine receptors with CHRNA2, CHRNA3 and CHRNA4, as well as CHRNA5 and CHRNB3 as accesory subunits. CHRNA3:CHRNB4 being predominant in neurons of the autonomic ganglia, it is known as ganglionic nicotinic receptor. CHRNA3:CHRNB4 or CHRNA3:CHRNA5:CHRNB4 play also an important role in the habenulo-interpeduncular tract, modulating the mesolimbic dopamine system and affecting reward circuits and addiction. Hypothalamic CHRNA3:CHRNB4 nAChR activation by nicotine leads to activation of POMC neurons and a decrease in food intake. The polypeptide is Neuronal acetylcholine receptor subunit beta-4 (Chrnb4) (Mus musculus (Mouse)).